A 385-amino-acid polypeptide reads, in one-letter code: MRKVLKKAALCTFGFSMLFGCASEEDTIVMAPVPVVQNQFEPTTEWTSSIGDGVGHYFSRLTPVYAYQKIYVASRDGLVKALDPENGKTIWERDLEQDDTARLSGGLTLTYGKVFIGSENGELITLDAETGEELWREKVDGEVLAKPLADEGYVMVHTSRGALIAFDAETGVEQWQINSEVPNLTLRGDSAPVSISGGVFWGMSNGRLAAALISKGQLLWQQPVGTPKGATEIDRLVDVDASPLILGSRLYTVGYNGQLIALDLRTGQPVWKRNYSSAMNMSSDGKRLFLVTEKDHVVAVDARSGTELWSNEELEYRQLTSPMIIDSYIVLADSEGYLHWLDRDTGLFMSQQEIDSDGIAVSPILVEDSFLVVTREGDIKKMRIK.

The N-terminal stretch at 1–20 is a signal peptide; it reads MRKVLKKAALCTFGFSMLFG. Cys-21 carries N-palmitoyl cysteine lipidation. Cys-21 carries the S-diacylglycerol cysteine lipid modification.

This sequence belongs to the BamB family. Part of the Bam complex.

It is found in the cell outer membrane. Its function is as follows. Part of the outer membrane protein assembly complex, which is involved in assembly and insertion of beta-barrel proteins into the outer membrane. The sequence is that of Outer membrane protein assembly factor BamB from Aliivibrio fischeri (strain ATCC 700601 / ES114) (Vibrio fischeri).